The following is a 211-amino-acid chain: Thymidine kinase (211 aa).

ATP-binding positions include 9-16 (STMNAGKS) and 87-90 (DEAQ). E88 functions as the Proton acceptor in the catalytic mechanism. 4 residues coordinate Zn(2+): C145, C147, C182, and H185.

Belongs to the thymidine kinase family. In terms of assembly, homotetramer.

It localises to the cytoplasm. It catalyses the reaction thymidine + ATP = dTMP + ADP + H(+). The polypeptide is Thymidine kinase (Rhodopirellula baltica (strain DSM 10527 / NCIMB 13988 / SH1)).